A 37-amino-acid chain; its full sequence is Photosystem II reaction center protein T (37 aa).

Residues 3–23 (ALVYTFLLVSTLGIIFFAIFF) traverse the membrane as a helical segment.

Belongs to the PsbT family. PSII is composed of 1 copy each of membrane proteins PsbA, PsbB, PsbC, PsbD, PsbE, PsbF, PsbH, PsbI, PsbJ, PsbK, PsbL, PsbM, PsbT, PsbY, PsbZ, Psb30/Ycf12, at least 3 peripheral proteins of the oxygen-evolving complex and a large number of cofactors. It forms dimeric complexes.

It is found in the plastid. Its subcellular location is the chloroplast thylakoid membrane. Functionally, found at the monomer-monomer interface of the photosystem II (PS II) dimer, plays a role in assembly and dimerization of PSII. PSII is a light-driven water plastoquinone oxidoreductase, using light energy to abstract electrons from H(2)O, generating a proton gradient subsequently used for ATP formation. The chain is Photosystem II reaction center protein T from Cucumis sativus (Cucumber).